Here is a 1025-residue protein sequence, read N- to C-terminus: DNA ligase 4 (1025 aa).

Positions 1 to 36 (MMQPTPAPSSAPGSPQRTQAEPEMETPSYPQPPQNV) are disordered. The ATP site is built by Glu-289, Lys-291, Leu-292, Arg-296, Glu-349, Phe-387, Glu-447, Lys-452, Lys-469, and Lys-471. Lys-291 acts as the N6-AMP-lysine intermediate in catalysis. Residue Glu-349 coordinates Mg(2+). A Mg(2+)-binding site is contributed by Glu-447. The BRCT 1 domain maps to 667 to 763 (VKTDIFNGMK…EPAPFKKKYF (97 aa)). A disordered region spans residues 773–904 (ADEYNEDDGE…TTPDVDGDVK (132 aa)). Composition is skewed to acidic residues over residues 775–785 (EYNEDDGEEEG) and 806–816 (SETEDEDEEQA). Positions 817–838 (PEIKEEQDGELHEWLKVDDRKS) are enriched in basic and acidic residues. Positions 845-870 (DEEDSVTEDDSDNADVADEEEPDLDD) are enriched in acidic residues. Over residues 891–904 (RHRETTPDVDGDVK) the composition is skewed to basic and acidic residues. Positions 915-1025 (DPDVIFKHLC…TLLDEEGESF (111 aa)) constitute a BRCT 2 domain.

This sequence belongs to the ATP-dependent DNA ligase family. It depends on Mg(2+) as a cofactor.

Its subcellular location is the nucleus. It carries out the reaction ATP + (deoxyribonucleotide)n-3'-hydroxyl + 5'-phospho-(deoxyribonucleotide)m = (deoxyribonucleotide)n+m + AMP + diphosphate.. Its function is as follows. DNA ligase involved in DNA non-homologous end joining (NHEJ); required for double-strand break (DSB) repair. This Coprinopsis cinerea (strain Okayama-7 / 130 / ATCC MYA-4618 / FGSC 9003) (Inky cap fungus) protein is DNA ligase 4 (LIG4).